The chain runs to 1033 residues: Isoleucine--tRNA ligase 2 (1033 aa).

The 'HIGH' region signature appears at 47–57; sequence PTANGLPHVGH. Positions 590-594 match the 'KMSKS' region motif; that stretch reads KMSKS. Lys-593 contributes to the ATP binding site.

It belongs to the class-I aminoacyl-tRNA synthetase family. IleS type 2 subfamily. In terms of assembly, monomer. Zn(2+) serves as cofactor.

It is found in the cytoplasm. The enzyme catalyses tRNA(Ile) + L-isoleucine + ATP = L-isoleucyl-tRNA(Ile) + AMP + diphosphate. Functionally, catalyzes the attachment of isoleucine to tRNA(Ile). As IleRS can inadvertently accommodate and process structurally similar amino acids such as valine, to avoid such errors it has two additional distinct tRNA(Ile)-dependent editing activities. One activity is designated as 'pretransfer' editing and involves the hydrolysis of activated Val-AMP. The other activity is designated 'posttransfer' editing and involves deacylation of mischarged Val-tRNA(Ile). This chain is Isoleucine--tRNA ligase 2, found in Bacillus cereus (strain ATCC 14579 / DSM 31 / CCUG 7414 / JCM 2152 / NBRC 15305 / NCIMB 9373 / NCTC 2599 / NRRL B-3711).